The primary structure comprises 456 residues: Ribosome assembly protein METTL17, mitochondrial (456 aa).

Residues 1–19 constitute a mitochondrion transit peptide; sequence MAAALKCLLTLGRWCPGLG. [4Fe-4S] cluster contacts are provided by Cys-333, Cys-339, Cys-347, and Cys-404.

The protein belongs to the methyltransferase superfamily. Rsm22 family. In terms of assembly, associates with the mitochondrial ribosome (mitoribosome).

The protein localises to the mitochondrion matrix. Functionally, mitochondrial ribosome (mitoribosome) assembly factor. Binds at the interface of the head and body domains of the mitochondrial small ribosomal subunit (mt-SSU), occluding the mRNA channel and preventing compaction of the head domain towards the body. Probable inactive methyltransferase: retains the characteristic folding and ability to bind S-adenosyl-L-methionine, but it probably lost its methyltransferase activity. This Homo sapiens (Human) protein is Ribosome assembly protein METTL17, mitochondrial.